The sequence spans 508 residues: DNA-directed RNA polymerase subunit Rpo1C (508 aa).

The interval 1–123 (MIIWKDTAKN…REKYEYEKKV (123 aa)) is unknown. Positions 124–508 (SSQVLDVIAE…IYKGYPKTKK (385 aa)) are DNA-directed RNA polymerase subunit Rpo1C.

The protein belongs to the RNA polymerase beta' chain family. Part of the RNA polymerase complex.

The protein resides in the cytoplasm. The enzyme catalyses RNA(n) + a ribonucleoside 5'-triphosphate = RNA(n+1) + diphosphate. Its function is as follows. DNA-dependent RNA polymerase (RNAP) catalyzes the transcription of DNA into RNA using the four ribonucleoside triphosphates as substrates. Forms part of the jaw domain. The polypeptide is DNA-directed RNA polymerase subunit Rpo1C (Thermoplasma volcanium (strain ATCC 51530 / DSM 4299 / JCM 9571 / NBRC 15438 / GSS1)).